Reading from the N-terminus, the 224-residue chain is MADS-box transcription factor 16 (224 aa).

The MADS-box domain maps to 1–61; sequence MGRGKIEIKR…GKYHEFCSPS (61 aa). The region spanning 84–174 is the K-box domain; it reads YENMQRTLSH…QQELGLREEP (91 aa).

In terms of assembly, may interact with the K-box of MADS4, MADS6 and MADS8. May form a heterodimer with MADS4. In terms of tissue distribution, expressed in lodicules, stamens and carpels.

It localises to the nucleus. Its function is as follows. Probable transcription factor involved in the development of floral organs. Required for normal development of lodicules and stamens (whorls 2 and 3). May function as a heterodimer with MADS4. In Oryza sativa subsp. japonica (Rice), this protein is MADS-box transcription factor 16 (MADS16).